We begin with the raw amino-acid sequence, 351 residues long: MLKTSEKIFSETPSIITKEEGLKILNGVIPLTTCLDKAFQERNRYFENKVRIHILDNIKNGYCPEDCGYCAQRKNANSGVQEYPMKSEQEIYEDAVQAKKNGAYRFCMVTSGTGPNRLTTEKLASTIQRITDELNMKVCLSAGLLDIEKAQVLKEAGLDRYNHNLNTSENHYSEICDTHTYLQRAQTLDSVSKAGIGMCSGVIVGMGESFQDIVDVAFQLKSFRVISIPVNFFIPVKGHTIKNPSVLTPELCVRILCMFRLINPDSEIRIAAGREGHLRSLSATALFAANSLFSSGYLNVKGSEILETVAMIRDAGFVPELSNGEILPENFGTESFYSEKNFPELYKFKKF.

The region spanning asparagine 48 to aspartate 265 is the Radical SAM core domain. Residues cysteine 63, cysteine 67, and cysteine 70 each coordinate [4Fe-4S] cluster. The [2Fe-2S] cluster site is built by cysteine 107, cysteine 139, cysteine 199, and arginine 269.

Belongs to the radical SAM superfamily. Biotin synthase family. In terms of assembly, homodimer. Requires [4Fe-4S] cluster as cofactor. The cofactor is [2Fe-2S] cluster.

It carries out the reaction (4R,5S)-dethiobiotin + (sulfur carrier)-SH + 2 reduced [2Fe-2S]-[ferredoxin] + 2 S-adenosyl-L-methionine = (sulfur carrier)-H + biotin + 2 5'-deoxyadenosine + 2 L-methionine + 2 oxidized [2Fe-2S]-[ferredoxin]. Its pathway is cofactor biosynthesis; biotin biosynthesis; biotin from 7,8-diaminononanoate: step 2/2. In terms of biological role, catalyzes the conversion of dethiobiotin (DTB) to biotin by the insertion of a sulfur atom into dethiobiotin via a radical-based mechanism. In Leptospira interrogans serogroup Icterohaemorrhagiae serovar copenhageni (strain Fiocruz L1-130), this protein is Biotin synthase.